Reading from the N-terminus, the 295-residue chain is GATA zinc finger domain-containing protein 23 (295 aa).

Residues 115 to 126 show a composition bias toward low complexity; the sequence is ASTSKTATSKNV. Residues 115–240 are disordered; sequence ASTSKTATSK…KRGRPSKIQP (126 aa). Polar residues predominate over residues 127 to 145; sequence ISNIENNTNKSQPLESNDL. Positions 146 to 163 are enriched in low complexity; it reads TPPSSKSSNSSPSTSPSK. Residues 164–174 are compositionally biased toward basic residues; sequence RVSKSKTRVTK. A compositionally biased stretch (low complexity) spans 181-227; the sequence is STSSSGETENLTTTSTADTTATTDTADTTDGTNTRTSNTSSDDTTTE. The a.T hook DNA-binding region spans 229-241; that stretch reads TKKRGRPSKIQPD. The GATA-type zinc-finger motif lies at 243 to 270; sequence CYVCRRTFTSYWRKGIFNDQNEDLCNPC.

This chain is GATA zinc finger domain-containing protein 23 (gtaW), found in Dictyostelium discoideum (Social amoeba).